Here is a 354-residue protein sequence, read N- to C-terminus: tRNA N6-adenosine threonylcarbamoyltransferase (354 aa).

Residues H111 and H115 each coordinate Fe cation. Residues 134–138 (LVSGG), D167, G180, and N279 each bind substrate. D319 is a binding site for Fe cation.

The protein belongs to the KAE1 / TsaD family. It depends on Fe(2+) as a cofactor.

The protein localises to the cytoplasm. The catalysed reaction is L-threonylcarbamoyladenylate + adenosine(37) in tRNA = N(6)-L-threonylcarbamoyladenosine(37) in tRNA + AMP + H(+). Its function is as follows. Required for the formation of a threonylcarbamoyl group on adenosine at position 37 (t(6)A37) in tRNAs that read codons beginning with adenine. Is involved in the transfer of the threonylcarbamoyl moiety of threonylcarbamoyl-AMP (TC-AMP) to the N6 group of A37, together with TsaE and TsaB. TsaD likely plays a direct catalytic role in this reaction. This chain is tRNA N6-adenosine threonylcarbamoyltransferase, found in Neisseria meningitidis.